Consider the following 210-residue polypeptide: Large ribosomal subunit protein uL3 (210 aa).

The tract at residues 133-152 is disordered; that stretch reads ATHGNSLSHRVHGSTGQNQT. The residue at position 151 (Gln151) is an N5-methylglutamine.

The protein belongs to the universal ribosomal protein uL3 family. Part of the 50S ribosomal subunit. Forms a cluster with proteins L14 and L19. Methylated by PrmB.

Functionally, one of the primary rRNA binding proteins, it binds directly near the 3'-end of the 23S rRNA, where it nucleates assembly of the 50S subunit. The chain is Large ribosomal subunit protein uL3 from Francisella tularensis subsp. holarctica (strain FTNF002-00 / FTA).